Consider the following 147-residue polypeptide: Large ribosomal subunit protein uL15 (147 aa).

Residues 1 to 10 are compositionally biased toward polar residues; it reads MYLNTLSPNS. Residues 1–48 are disordered; sequence MYLNTLSPNSKSHKKSKRVGRGIGSGFGKTSGRGHKGQKSRSGCKIRR. The segment covering 11-20 has biased composition (basic residues); the sequence is KSHKKSKRVG. Residues 21–31 are compositionally biased toward gly residues; that stretch reads RGIGSGFGKTS. Residues 32-47 show a composition bias toward basic residues; the sequence is GRGHKGQKSRSGCKIR.

This sequence belongs to the universal ribosomal protein uL15 family. In terms of assembly, part of the 50S ribosomal subunit.

Its function is as follows. Binds to the 23S rRNA. The protein is Large ribosomal subunit protein uL15 of Buchnera aphidicola subsp. Baizongia pistaciae (strain Bp).